Consider the following 435-residue polypeptide: GTPase Der (435 aa).

EngA-type G domains lie at 3-167 (NIVA…KDEG) and 176-351 (PRIA…ENRG). Residues 9–16 (GRPNVGKS), 56–60 (DTGGY), 119–122 (NKSD), 182–189 (GRPNAGKS), 229–233 (DTAGI), and 294–297 (NKWD) each bind GTP. The KH-like domain maps to 352–435 (KRIPTSELND…VPISIVYRKK (84 aa)).

It belongs to the TRAFAC class TrmE-Era-EngA-EngB-Septin-like GTPase superfamily. EngA (Der) GTPase family. In terms of assembly, associates with the 50S ribosomal subunit.

In terms of biological role, GTPase that plays an essential role in the late steps of ribosome biogenesis. This Cytophaga hutchinsonii (strain ATCC 33406 / DSM 1761 / CIP 103989 / NBRC 15051 / NCIMB 9469 / D465) protein is GTPase Der.